The following is a 139-amino-acid chain: Ribonuclease P protein component (139 aa).

It belongs to the RnpA family. As to quaternary structure, consists of a catalytic RNA component (M1 or rnpB) and a protein subunit.

The catalysed reaction is Endonucleolytic cleavage of RNA, removing 5'-extranucleotides from tRNA precursor.. Its function is as follows. RNaseP catalyzes the removal of the 5'-leader sequence from pre-tRNA to produce the mature 5'-terminus. It can also cleave other RNA substrates such as 4.5S RNA. The protein component plays an auxiliary but essential role in vivo by binding to the 5'-leader sequence and broadening the substrate specificity of the ribozyme. This Paraburkholderia xenovorans (strain LB400) protein is Ribonuclease P protein component.